The sequence spans 311 residues: Acetyl-coenzyme A carboxylase carboxyl transferase subunit beta (311 aa).

The 268-residue stretch at 32–299 (LWVKCPVSEE…TSMPAALTPP (268 aa)) folds into the CoA carboxyltransferase N-terminal domain. The interval 291-311 (SMPAALTPPAPDHVVADGGSH) is disordered.

The protein belongs to the AccD/PCCB family. Acetyl-CoA carboxylase is a heterohexamer composed of biotin carboxyl carrier protein (AccB), biotin carboxylase (AccC) and two subunits each of ACCase subunit alpha (AccA) and ACCase subunit beta (AccD).

Its subcellular location is the cytoplasm. The catalysed reaction is N(6)-carboxybiotinyl-L-lysyl-[protein] + acetyl-CoA = N(6)-biotinyl-L-lysyl-[protein] + malonyl-CoA. The protein operates within lipid metabolism; malonyl-CoA biosynthesis; malonyl-CoA from acetyl-CoA: step 1/1. Component of the acetyl coenzyme A carboxylase (ACC) complex. Biotin carboxylase (BC) catalyzes the carboxylation of biotin on its carrier protein (BCCP) and then the CO(2) group is transferred by the transcarboxylase to acetyl-CoA to form malonyl-CoA. This Maricaulis maris (strain MCS10) (Caulobacter maris) protein is Acetyl-coenzyme A carboxylase carboxyl transferase subunit beta.